We begin with the raw amino-acid sequence, 530 residues long: Neutral amino acid transporter A (530 aa).

Met1 carries the post-translational modification N-acetylmethionine. The span at 1–10 (MEKSSETNGY) shows a compositional bias: polar residues. A disordered region spans residues 1-28 (MEKSSETNGYLDSAQEGPAAGPGEPGTT). Residues 1–41 (MEKSSETNGYLDSAQEGPAAGPGEPGTTARRAGRCAGFLRR) lie on the Cytoplasmic side of the membrane. Positions 16-28 (EGPAAGPGEPGTT) are enriched in low complexity. Helical transmembrane passes span 42-62 (HGLV…GAAL), 88-108 (MIIL…LDAS), and 119-139 (AYFG…AFII). The Extracellular segment spans residues 140 to 216 (KPGSGSQTLQ…VTIEKIPIGT (77 aa)). The N-linked (GlcNAc...) asparagine glycan is linked to Asn201. The next 6 membrane-spanning stretches (helical) occupy residues 217-237 (EIEG…GVAL), 257-277 (ATMV…MFLV), 298-318 (IFTS…LIYF), 328-348 (FLLG…SSAT), 373-393 (IGAT…AVFI), and 418-438 (VGAA…LEAI). The tract at residues 488 to 530 (ELSEVKVEAIPNSKSEEETSPLVTHPNPTGPAASTPESKESVL) is disordered. Phosphoserine is present on residues Ser507, Ser525, and Ser528.

This sequence belongs to the dicarboxylate/amino acid:cation symporter (DAACS) (TC 2.A.23) family. SLC1A4 subfamily.

It is found in the membrane. The protein resides in the melanosome. It carries out the reaction L-threonine(in) + Na(+)(in) = L-threonine(out) + Na(+)(out). The catalysed reaction is L-serine(in) + Na(+)(in) = L-serine(out) + Na(+)(out). It catalyses the reaction L-cysteine(in) + Na(+)(in) = L-cysteine(out) + Na(+)(out). The enzyme catalyses L-alanine(in) + Na(+)(in) = L-alanine(out) + Na(+)(out). It carries out the reaction L-proline(in) + Na(+)(in) = L-proline(out) + Na(+)(out). The catalysed reaction is 4-hydroxy-L-proline(in) + Na(+)(in) = 4-hydroxy-L-proline(out) + Na(+)(out). Functionally, sodium-dependent neutral amino-acid transporter that mediates transport of alanine, serine, cysteine, proline, hydroxyproline and threonine. The protein is Neutral amino acid transporter A (SLC1A4) of Bos taurus (Bovine).